The following is a 205-amino-acid chain: Thymidylate kinase (205 aa).

Residue 9–16 (GPEGSGKT) participates in ATP binding.

The protein belongs to the thymidylate kinase family.

It catalyses the reaction dTMP + ATP = dTDP + ADP. Functionally, phosphorylation of dTMP to form dTDP in both de novo and salvage pathways of dTTP synthesis. In Staphylococcus aureus (strain NCTC 8325 / PS 47), this protein is Thymidylate kinase.